The chain runs to 258 residues: Imidazole glycerol phosphate synthase subunit HisF (258 aa).

Residues D11 and D130 contribute to the active site.

It belongs to the HisA/HisF family. In terms of assembly, heterodimer of HisH and HisF.

The protein resides in the cytoplasm. The enzyme catalyses 5-[(5-phospho-1-deoxy-D-ribulos-1-ylimino)methylamino]-1-(5-phospho-beta-D-ribosyl)imidazole-4-carboxamide + L-glutamine = D-erythro-1-(imidazol-4-yl)glycerol 3-phosphate + 5-amino-1-(5-phospho-beta-D-ribosyl)imidazole-4-carboxamide + L-glutamate + H(+). It functions in the pathway amino-acid biosynthesis; L-histidine biosynthesis; L-histidine from 5-phospho-alpha-D-ribose 1-diphosphate: step 5/9. In terms of biological role, IGPS catalyzes the conversion of PRFAR and glutamine to IGP, AICAR and glutamate. The HisF subunit catalyzes the cyclization activity that produces IGP and AICAR from PRFAR using the ammonia provided by the HisH subunit. The polypeptide is Imidazole glycerol phosphate synthase subunit HisF (Xanthomonas axonopodis pv. citri (strain 306)).